A 415-amino-acid chain; its full sequence is Gamma-glutamyl phosphate reductase (415 aa).

The protein belongs to the gamma-glutamyl phosphate reductase family.

The protein localises to the cytoplasm. It carries out the reaction L-glutamate 5-semialdehyde + phosphate + NADP(+) = L-glutamyl 5-phosphate + NADPH + H(+). It functions in the pathway amino-acid biosynthesis; L-proline biosynthesis; L-glutamate 5-semialdehyde from L-glutamate: step 2/2. In terms of biological role, catalyzes the NADPH-dependent reduction of L-glutamate 5-phosphate into L-glutamate 5-semialdehyde and phosphate. The product spontaneously undergoes cyclization to form 1-pyrroline-5-carboxylate. This chain is Gamma-glutamyl phosphate reductase, found in Bacillus thuringiensis subsp. konkukian (strain 97-27).